A 289-amino-acid polypeptide reads, in one-letter code: Ribosomal RNA small subunit methyltransferase A (289 aa).

The S-adenosyl-L-methionine site is built by Asn-21, Leu-23, Gly-48, Glu-69, Asp-94, and Asn-120.

Belongs to the class I-like SAM-binding methyltransferase superfamily. rRNA adenine N(6)-methyltransferase family. RsmA subfamily.

Its subcellular location is the cytoplasm. It carries out the reaction adenosine(1518)/adenosine(1519) in 16S rRNA + 4 S-adenosyl-L-methionine = N(6)-dimethyladenosine(1518)/N(6)-dimethyladenosine(1519) in 16S rRNA + 4 S-adenosyl-L-homocysteine + 4 H(+). Functionally, specifically dimethylates two adjacent adenosines (A1518 and A1519) in the loop of a conserved hairpin near the 3'-end of 16S rRNA in the 30S particle. May play a critical role in biogenesis of 30S subunits. This Actinobacillus pleuropneumoniae serotype 7 (strain AP76) protein is Ribosomal RNA small subunit methyltransferase A.